Reading from the N-terminus, the 392-residue chain is uncharacterized protein (392 aa).

The protein belongs to the chlamydial CPn_0675/CT_696/TC_0068 family.

This is an uncharacterized protein from Chlamydia trachomatis serovar D (strain ATCC VR-885 / DSM 19411 / UW-3/Cx).